The primary structure comprises 299 residues: Glycine--tRNA ligase alpha subunit (299 aa).

Belongs to the class-II aminoacyl-tRNA synthetase family. As to quaternary structure, tetramer of two alpha and two beta subunits.

The protein resides in the cytoplasm. The enzyme catalyses tRNA(Gly) + glycine + ATP = glycyl-tRNA(Gly) + AMP + diphosphate. The protein is Glycine--tRNA ligase alpha subunit of Lactiplantibacillus plantarum (strain ATCC BAA-793 / NCIMB 8826 / WCFS1) (Lactobacillus plantarum).